We begin with the raw amino-acid sequence, 144 residues long: Putative acetyltransferase SAOUHSC_00995 (144 aa).

Residues 1-141 (MFSKVNNQKM…EHIEMTKKLT (141 aa)) enclose the N-acetyltransferase domain. Residues 71 to 73 (VAV), glycine 79, and 112 to 114 (PFY) contribute to the CoA site.

Belongs to the UPF0039 (ElaA) family.

Its function is as follows. Could catalyze the transfer of an acetyl group from acetyl coenzyme A (AcCoA) to an acceptor substrate and release both CoA and the acetylated product. The sequence is that of Putative acetyltransferase SAOUHSC_00995 from Staphylococcus aureus (strain NCTC 8325 / PS 47).